Reading from the N-terminus, the 616-residue chain is Protein cereblon (616 aa).

3 disordered regions span residues 1-39 (MDEE…DDSV), 63-137 (FGPS…AMPR), and 182-220 (SQER…DIDM). Residues 11-32 (AQEQEVAGSAGEAAAGPSGAEV) are compositionally biased toward low complexity. Positions 96–107 (SEEDIVLDDGTE) are enriched in acidic residues. A compositionally biased stretch (basic and acidic residues) spans 183-192 (QERRRSRNSD). Residues 194 to 203 (VSPEAEDDEL) are compositionally biased toward acidic residues. Pro residues predominate over residues 206–215 (HPPPPPPRPP). Positions 257 to 482 (HMLIFLHQYI…LIGGILKEET (226 aa)) constitute a Lon N-terminal domain. Positions 481-590 (ETLFYCRYCN…LAGSSVRIGK (110 aa)) constitute a CULT domain. Residues Cys486, Cys489, Cys555, and Cys558 each coordinate Zn(2+).

The protein belongs to the CRBN family. As to quaternary structure, likely a component of a DCX (DDB1-CUL4-X-box) protein ligase complex. May interact with pic/DDB1. Post-translationally, ubiquitinated.

It localises to the nucleus. It functions in the pathway protein modification; protein ubiquitination. Substrate recognition component of a DCX (DDB1-CUL4-X-box) E3 protein ligase complex that mediates the ubiquitination and subsequent proteasomal degradation of target proteins. Has an essential role in mediating growth by negatively regulating insulin signaling. It also has a role in maintaining presynaptic function in the neuromuscular junction synapses of third-instar larvae. The protein is Protein cereblon of Drosophila pseudoobscura pseudoobscura (Fruit fly).